Here is a 354-residue protein sequence, read N- to C-terminus: Uroporphyrinogen decarboxylase (354 aa).

Substrate-binding positions include 27-31, Asp77, Tyr154, Thr209, and His327; that span reads RQAGR.

It belongs to the uroporphyrinogen decarboxylase family. As to quaternary structure, homodimer.

The protein localises to the cytoplasm. It carries out the reaction uroporphyrinogen III + 4 H(+) = coproporphyrinogen III + 4 CO2. It participates in porphyrin-containing compound metabolism; protoporphyrin-IX biosynthesis; coproporphyrinogen-III from 5-aminolevulinate: step 4/4. Functionally, catalyzes the decarboxylation of four acetate groups of uroporphyrinogen-III to yield coproporphyrinogen-III. The polypeptide is Uroporphyrinogen decarboxylase (Shigella flexneri serotype 5b (strain 8401)).